We begin with the raw amino-acid sequence, 65 residues long: MSSKLKGPDGRLPDRLPDGRPAVSWERRWTEGQLPLWLVATAGGIAVIFVLGIFFYGSYTGVGSA.

The span at Met-1–Asp-18 shows a compositional bias: basic and acidic residues. The tract at residues Met-1–Pro-21 is disordered. A helical transmembrane segment spans residues Leu-36 to Tyr-56.

This sequence belongs to the PsbJ family. As to quaternary structure, PSII is composed of 1 copy each of membrane proteins PsbA, PsbB, PsbC, PsbD, PsbE, PsbF, PsbH, PsbI, PsbJ, PsbK, PsbL, PsbM, PsbT, PsbX, PsbY, Psb30/Ycf12, peripheral proteins PsbO, CyanoQ (PsbQ), PsbU, PsbV and a large number of cofactors. It forms dimeric complexes.

The protein resides in the cellular thylakoid membrane. One of the components of the core complex of photosystem II (PSII). PSII is a light-driven water:plastoquinone oxidoreductase that uses light energy to abstract electrons from H(2)O, generating O(2) and a proton gradient subsequently used for ATP formation. It consists of a core antenna complex that captures photons, and an electron transfer chain that converts photonic excitation into a charge separation. In Prochlorococcus marinus (strain SARG / CCMP1375 / SS120), this protein is Photosystem II reaction center protein J.